A 345-amino-acid polypeptide reads, in one-letter code: S-adenosylmethionine:tRNA ribosyltransferase-isomerase (345 aa).

It belongs to the QueA family. Monomer.

It localises to the cytoplasm. It catalyses the reaction 7-aminomethyl-7-carbaguanosine(34) in tRNA + S-adenosyl-L-methionine = epoxyqueuosine(34) in tRNA + adenine + L-methionine + 2 H(+). Its pathway is tRNA modification; tRNA-queuosine biosynthesis. Functionally, transfers and isomerizes the ribose moiety from AdoMet to the 7-aminomethyl group of 7-deazaguanine (preQ1-tRNA) to give epoxyqueuosine (oQ-tRNA). This Anaeromyxobacter dehalogenans (strain 2CP-C) protein is S-adenosylmethionine:tRNA ribosyltransferase-isomerase.